The primary structure comprises 540 residues: Growth factor receptor-bound protein 14 (540 aa).

At T2 the chain carries N-acetylthreonine. A Phosphothreonine modification is found at Q9. In terms of domain architecture, Ras-associating spans 106–192; it reads KKQVIKVYSE…NKLYFRKNYA (87 aa). Residues 234 to 342 enclose the PH domain; it reads YPEIHGFLHA…WVTAIRLLKY (109 aa). Phosphoserine is present on residues S372 and S375. Positions 439 to 535 constitute an SH2 domain; sequence WFHHKISRDE…VLPCKLKHYC (97 aa).

The protein belongs to the GRB7/10/14 family. In terms of assembly, interacts with the cytoplasmic domain of the autophosphorylated insulin receptor (INSR), through the SH2 domain. Interacts with GRB14 (via BPS domain); this interaction protects the tyrosines in the activation loop on INSR from dephosphorylation. Binds to the ankyrin repeat region of TNKS2 via its N-terminus. Interacts with activated NRAS. Interacts (via SH2 domain) with TEK/TIE2 (tyrosine phosphorylated). In terms of processing, phosphorylated on serine residues. Phosphorylated on tyrosine residues by TEK/TIE2. Expressed at high levels in the liver, kidney, pancreas, testis, ovary, heart and skeletal muscle.

Its subcellular location is the cytoplasm. The protein localises to the endosome membrane. Functionally, adapter protein which modulates coupling of cell surface receptor kinases with specific signaling pathways. Binds to, and suppresses signals from, the activated insulin receptor (INSR). Potent inhibitor of insulin-stimulated MAPK3 phosphorylation. Plays a critical role regulating PDPK1 membrane translocation in response to insulin stimulation and serves as an adapter protein to recruit PDPK1 to activated insulin receptor, thus promoting PKB/AKT1 phosphorylation and transduction of the insulin signal. The sequence is that of Growth factor receptor-bound protein 14 (GRB14) from Homo sapiens (Human).